A 224-amino-acid polypeptide reads, in one-letter code: Small ribosomal subunit protein uS3 (224 aa).

The 69-residue stretch at 39 to 107 (VRKYIQNALA…PVHINIEEIR (69 aa)) folds into the KH type-2 domain.

Belongs to the universal ribosomal protein uS3 family. Part of the 30S ribosomal subunit. Forms a tight complex with proteins S10 and S14.

In terms of biological role, binds the lower part of the 30S subunit head. Binds mRNA in the 70S ribosome, positioning it for translation. The sequence is that of Small ribosomal subunit protein uS3 from Saccharophagus degradans (strain 2-40 / ATCC 43961 / DSM 17024).